Consider the following 696-residue polypeptide: Polyribonucleotide nucleotidyltransferase (696 aa).

The Mg(2+) site is built by D489 and D495. The KH domain maps to 556-615; the sequence is PQYVTMKINPEKIRDVIGKGGVVIREITEATNCAIDISDDGTIKIAAHTTEEGEAAKRRI. The region spanning 625–693 is the S1 motif domain; the sequence is GKVYEGTVVK…RQGRVRLSMK (69 aa).

It belongs to the polyribonucleotide nucleotidyltransferase family. Component of the RNA degradosome, which is a multiprotein complex involved in RNA processing and mRNA degradation. The cofactor is Mg(2+).

Its subcellular location is the cytoplasm. The catalysed reaction is RNA(n+1) + phosphate = RNA(n) + a ribonucleoside 5'-diphosphate. Its function is as follows. Involved in mRNA degradation. Catalyzes the phosphorolysis of single-stranded polyribonucleotides processively in the 3'- to 5'-direction. The sequence is that of Polyribonucleotide nucleotidyltransferase from Coxiella burnetii (strain CbuG_Q212) (Coxiella burnetii (strain Q212)).